Reading from the N-terminus, the 93-residue chain is Protein Tat (93 aa).

The interval 1–24 (MEPVDPELEPWNHPGSQPKTACNN) is interaction with human CREBBP. Residues 1-48 (MEPVDPELEPWNHPGSQPKTACNNCHCKVCCYHCVYCFTKKGLGISYG) are transactivation. Cysteine 22, cysteine 25, and cysteine 27 together coordinate Zn(2+). The interval 22–37 (CNNCHCKVCCYHCVYC) is cysteine-rich. Residue lysine 28 is modified to N6-acetyllysine; by host PCAF. Zn(2+)-binding residues include cysteine 30, histidine 33, cysteine 34, and cysteine 37. A core region spans residues 38 to 48 (FTKKGLGISYG). The span at 48 to 58 (GRKKRSQRRRT) shows a compositional bias: basic residues. The disordered stretch occupies residues 48 to 93 (GRKKRSQRRRTPQSNKSHQDPLPKQPLSQRLGDQTGQKEQKKTLES). The short motif at 49-57 (RKKRSQRRR) is the Nuclear localization signal, RNA-binding (TAR), and protein transduction element. Positions 49–86 (RKKRSQRRRTPQSNKSHQDPLPKQPLSQRLGDQTGQKE) are interaction with the host capping enzyme RNGTT. An N6-acetyllysine; by host EP300 and GCN5L2 mark is found at lysine 50 and lysine 51. Residue arginine 52 is modified to Asymmetric dimethylarginine; by host PRMT6. A Glycyl lysine isopeptide (Lys-Gly) (interchain with G-Cter in ubiquitin) cross-link involves residue lysine 71. Polar residues predominate over residues 73–82 (PLSQRLGDQT). The segment covering 83-93 (GQKEQKKTLES) has biased composition (basic and acidic residues).

It belongs to the lentiviruses Tat family. As to quaternary structure, interacts with host CCNT1. Associates with the P-TEFb complex composed at least of Tat, P-TEFb (CDK9 and CCNT1), TAR RNA, RNA Pol II. Recruits the HATs CREBBP, TAF1/TFIID, EP300, PCAF and GCN5L2. Interacts with host KAT5/Tip60; this interaction targets the latter to degradation. Interacts with the host deacetylase SIRT1. Interacts with host capping enzyme RNGTT; this interaction stimulates RNGTT. Binds to host KDR, and to the host integrins ITGAV/ITGB3 and ITGA5/ITGB1. Interacts with host KPNB1/importin beta-1 without previous binding to KPNA1/importin alpha-1. Interacts with EIF2AK2. Interacts with host nucleosome assembly protein NAP1L1; this interaction may be required for the transport of Tat within the nucleus, since the two proteins interact at the nuclear rim. Interacts with host C1QBP/SF2P32; this interaction involves lysine-acetylated Tat. Interacts with the host chemokine receptors CCR2, CCR3 and CXCR4. Interacts with host DPP4/CD26; this interaction may trigger an anti-proliferative effect. Interacts with host LDLR. Interacts with the host extracellular matrix metalloproteinase MMP1. Interacts with host PRMT6; this interaction mediates Tat's methylation. Interacts with, and is ubiquitinated by MDM2/Hdm2. Interacts with host PSMC3 and HTATIP2. Interacts with STAB1; this interaction may overcome SATB1-mediated repression of IL2 and IL2RA (interleukin) in T cells by binding to the same domain than HDAC1. Interacts (when acetylated) with human CDK13, thereby increasing HIV-1 mRNA splicing and promoting the production of the doubly spliced HIV-1 protein Nef. Interacts with host TBP; this interaction modulates the activity of transcriptional pre-initiation complex. Interacts with host RELA. In terms of processing, asymmetrical arginine methylation by host PRMT6 seems to diminish the transactivation capacity of Tat and affects the interaction with host CCNT1. Acetylation by EP300, CREBBP, GCN5L2/GCN5 and PCAF regulates the transactivation activity of Tat. EP300-mediated acetylation of Lys-50 promotes dissociation of Tat from the TAR RNA through the competitive binding to PCAF's bromodomain. In addition, the non-acetylated Tat's N-terminus can also interact with PCAF. PCAF-mediated acetylation of Lys-28 enhances Tat's binding to CCNT1. Lys-50 is deacetylated by SIRT1. Post-translationally, polyubiquitination by host MDM2 does not target Tat to degradation, but activates its transactivation function and fosters interaction with CCNT1 and TAR RNA. In terms of processing, phosphorylated by EIF2AK2 on serine and threonine residues adjacent to the basic region important for TAR RNA binding and function. Phosphorylation of Tat by EIF2AK2 is dependent on the prior activation of EIF2AK2 by dsRNA.

It is found in the host nucleus. The protein localises to the host nucleolus. The protein resides in the host cytoplasm. Its subcellular location is the secreted. Its function is as follows. Transcriptional activator that increases RNA Pol II processivity, thereby increasing the level of full-length viral transcripts. Recognizes a hairpin structure at the 5'-LTR of the nascent viral mRNAs referred to as the transactivation responsive RNA element (TAR) and recruits the cyclin T1-CDK9 complex (P-TEFb complex) that will in turn hyperphosphorylate the RNA polymerase II to allow efficient elongation. The CDK9 component of P-TEFb and other Tat-activated kinases hyperphosphorylate the C-terminus of RNA Pol II that becomes stabilized and much more processive. Other factors such as HTATSF1/Tat-SF1, SUPT5H/SPT5, and HTATIP2 are also important for Tat's function. Besides its effect on RNA Pol II processivity, Tat induces chromatin remodeling of proviral genes by recruiting the histone acetyltransferases (HATs) CREBBP, EP300 and PCAF to the chromatin. This also contributes to the increase in proviral transcription rate, especially when the provirus integrates in transcriptionally silent region of the host genome. To ensure maximal activation of the LTR, Tat mediates nuclear translocation of NF-kappa-B by interacting with host RELA. Through its interaction with host TBP, Tat may also modulate transcription initiation. Tat can reactivate a latently infected cell by penetrating in it and transactivating its LTR promoter. In the cytoplasm, Tat is thought to act as a translational activator of HIV-1 mRNAs. Extracellular circulating Tat can be endocytosed by surrounding uninfected cells via the binding to several surface receptors such as CD26, CXCR4, heparan sulfate proteoglycans (HSPG) or LDLR. Neurons are rarely infected, but they internalize Tat via their LDLR. Through its interaction with nuclear HATs, Tat is potentially able to control the acetylation-dependent cellular gene expression. Modulates the expression of many cellular genes involved in cell survival, proliferation or in coding for cytokines or cytokine receptors. Tat plays a role in T-cell and neurons apoptosis. Tat induced neurotoxicity and apoptosis probably contribute to neuroAIDS. Circulating Tat also acts as a chemokine-like and/or growth factor-like molecule that binds to specific receptors on the surface of the cells, affecting many cellular pathways. In the vascular system, Tat binds to ITGAV/ITGB3 and ITGA5/ITGB1 integrins dimers at the surface of endothelial cells and competes with bFGF for heparin-binding sites, leading to an excess of soluble bFGF. This is Protein Tat from Pan troglodytes (Chimpanzee).